The chain runs to 236 residues: Thiamine import ATP-binding protein ThiQ (236 aa).

Residues 2 to 230 enclose the ABC transporter domain; it reads LKLEKITYLY…SAAKASVLGI (229 aa). An ATP-binding site is contributed by 32–39; it reads GPSGAGKS.

Belongs to the ABC transporter superfamily. Thiamine importer (TC 3.A.1.19.1) family. In terms of assembly, the complex is composed of two ATP-binding proteins (ThiQ), two transmembrane proteins (ThiP) and a solute-binding protein (ThiB).

The protein localises to the cell inner membrane. It catalyses the reaction thiamine(out) + ATP + H2O = thiamine(in) + ADP + phosphate + H(+). In terms of biological role, part of the ABC transporter complex ThiBPQ involved in thiamine import. Responsible for energy coupling to the transport system. In Yersinia pseudotuberculosis serotype I (strain IP32953), this protein is Thiamine import ATP-binding protein ThiQ.